Here is a 207-residue protein sequence, read N- to C-terminus: Thymidylate kinase (207 aa).

12-19 lines the ATP pocket; that stretch reads GVDGAGKS.

This sequence belongs to the thymidylate kinase family.

It catalyses the reaction dTMP + ATP = dTDP + ADP. In terms of biological role, phosphorylation of dTMP to form dTDP in both de novo and salvage pathways of dTTP synthesis. The sequence is that of Thymidylate kinase from Bordetella petrii (strain ATCC BAA-461 / DSM 12804 / CCUG 43448).